A 416-amino-acid chain; its full sequence is UDP-N-acetylmuramoylalanine--D-glutamate ligase (416 aa).

104–110 (GSNGKST) lines the ATP pocket.

This sequence belongs to the MurCDEF family.

It is found in the cytoplasm. The enzyme catalyses UDP-N-acetyl-alpha-D-muramoyl-L-alanine + D-glutamate + ATP = UDP-N-acetyl-alpha-D-muramoyl-L-alanyl-D-glutamate + ADP + phosphate + H(+). It functions in the pathway cell wall biogenesis; peptidoglycan biosynthesis. In terms of biological role, cell wall formation. Catalyzes the addition of glutamate to the nucleotide precursor UDP-N-acetylmuramoyl-L-alanine (UMA). In Francisella tularensis subsp. mediasiatica (strain FSC147), this protein is UDP-N-acetylmuramoylalanine--D-glutamate ligase.